A 545-amino-acid chain; its full sequence is Membrane protein insertase YidC (545 aa).

The helical transmembrane segment at 8–28 threads the bilayer; the sequence is ILLATVLSVGILILWQVIFPK. A disordered region spans residues 31 to 69; that stretch reads PPKPAPTPAAEVAKPAAPAAPAPGAAAPAVPAPPPDAPE. The span at 38-59 shows a compositional bias: low complexity; the sequence is PAAEVAKPAAPAAPAPGAAAPA. 5 helical membrane passes run 325–345, 355–375, 421–441, 458–478, and 497–517; these read IDYG…LYVM, WGVA…PLTY, LGGC…YAAL, LTAH…SFVM, and FFPG…TLYI.

Belongs to the OXA1/ALB3/YidC family. Type 1 subfamily. Interacts with the Sec translocase complex via SecD. Specifically interacts with transmembrane segments of nascent integral membrane proteins during membrane integration.

The protein resides in the cell inner membrane. Required for the insertion and/or proper folding and/or complex formation of integral membrane proteins into the membrane. Involved in integration of membrane proteins that insert both dependently and independently of the Sec translocase complex, as well as at least some lipoproteins. Aids folding of multispanning membrane proteins. The sequence is that of Membrane protein insertase YidC from Anaeromyxobacter dehalogenans (strain 2CP-C).